The chain runs to 335 residues: ATP-dependent 6-phosphofructokinase (335 aa).

Gly11 contacts ATP. Position 21–25 (21–25 (RAVVR)) interacts with ADP. ATP-binding positions include 72–73 (RY) and 102–105 (GDGS). Asp103 contributes to the Mg(2+) binding site. Substrate is bound at residue 125-127 (TID). Asp127 (proton acceptor) is an active-site residue. An ADP-binding site is contributed by Arg154. Residues Arg162 and 169–171 (MGR) each bind substrate. ADP contacts are provided by residues 185-187 (GAD) and 213-215 (KKH). Substrate contacts are provided by residues Glu222, Arg244, and 250–253 (HIQR).

Belongs to the phosphofructokinase type A (PFKA) family. ATP-dependent PFK group I subfamily. Prokaryotic clade 'B1' sub-subfamily. Homotetramer. Mg(2+) serves as cofactor.

The protein resides in the cytoplasm. It carries out the reaction beta-D-fructose 6-phosphate + ATP = beta-D-fructose 1,6-bisphosphate + ADP + H(+). Its pathway is carbohydrate degradation; glycolysis; D-glyceraldehyde 3-phosphate and glycerone phosphate from D-glucose: step 3/4. Its activity is regulated as follows. Allosterically activated by ADP and other diphosphonucleosides, and allosterically inhibited by phosphoenolpyruvate. Catalyzes the phosphorylation of D-fructose 6-phosphate to fructose 1,6-bisphosphate by ATP, the first committing step of glycolysis. This chain is ATP-dependent 6-phosphofructokinase, found in Streptococcus pneumoniae serotype 19F (strain G54).